We begin with the raw amino-acid sequence, 372 residues long: Cytochrome b (372 aa).

A run of 4 helical transmembrane segments spans residues 25–45, 69–90, 105–125, and 170–190; these read FGSM…FLAL, WIMQ…YIHI, WLSG…GYVL, and FFAL…IHII. Heme b is bound by residues His75 and His89. Residues His174 and His188 each coordinate heme b. A ubiquinone is bound at residue His193. The next 4 membrane-spanning stretches (helical) occupy residues 218-238, 280-300, 312-332, and 339-358; these read YKDM…LSFA, LGGT…PFTH, LSQI…WTAS, and FITI…ITTP.

It belongs to the cytochrome b family. In terms of assembly, the cytochrome bc1 complex contains 3 respiratory subunits (MT-CYB, CYC1 and UQCRFS1), 2 core proteins (UQCRC1 and UQCRC2) and probably 6 low-molecular weight proteins. The cofactor is heme b.

Its subcellular location is the mitochondrion inner membrane. Functionally, component of the ubiquinol-cytochrome c reductase complex (complex III or cytochrome b-c1 complex) that is part of the mitochondrial respiratory chain. The b-c1 complex mediates electron transfer from ubiquinol to cytochrome c. Contributes to the generation of a proton gradient across the mitochondrial membrane that is then used for ATP synthesis. The sequence is that of Cytochrome b (MT-CYB) from Naja nivea (Cape cobra).